A 142-amino-acid chain; its full sequence is Maximins y/Hw (142 aa).

The N-terminal stretch at 1–18 is a signal peptide; sequence MIFKYIVAVSFLIASGYA. The propeptide occupies 19–43; sequence RSVKNDEQSLSQREVLEEESLREIR. Phe-68 carries the post-translational modification Phenylalanine amide. Residues 72 to 121 constitute a propeptide that is removed on maturation; sequence TAEDHEVMKRLEAVIRDLDSLDHSEEASERETRGFNQEEIANLFTKKEKR. Isoleucine amide is present on Ile-141.

It belongs to the bombinin family. In terms of tissue distribution, expressed by the skin glands.

Its subcellular location is the secreted. In terms of biological role, maximin-y shows antimicrobial activity against bacteria and against the fungus C.albicans. It has little hemolytic activity. Maximin-Hw shows antimicrobial activity against bacteria and against the fungus C.albicans. Shows strong hemolytic activity. In Bombina maxima (Giant fire-bellied toad), this protein is Maximins y/Hw.